Reading from the N-terminus, the 617-residue chain is DNA double-strand break repair protein Mre11 (617 aa).

Mn(2+) is bound by residues D12, H14, D53, and N88. H89 serves as the catalytic Proton donor. H158, D189, and H191 together coordinate Mn(2+). Residues 395–432 (SPVDPSSSVSSIESSGSVSPIDSVSTVSPSSPSSSAII) show a composition bias toward low complexity. Disordered regions lie at residues 395–437 (SPVD…EPEE) and 513–617 (VEDE…GDYL). Positions 529 to 547 (APQSSSPVSFSDNSQTGFS) are enriched in polar residues. Residues 549–559 (ISPPESIPSPE) are compositionally biased toward low complexity. Positions 560-583 (ILKENSEADADEKPVDGKLSEEKP) are enriched in basic and acidic residues.

Belongs to the MRE11/RAD32 family. Homodimer. Forms a heterotetramer composed of two Mre11 subunits and two Rad50 subunits. Mn(2+) is required as a cofactor.

With respect to regulation, nuclease activity is regulated by Rad50. In terms of biological role, part of the Rad50/Mre11 complex, which is involved in the early steps of DNA double-strand break (DSB) repair. The complex may facilitate opening of the processed DNA ends to aid in the recruitment of HerA and NurA. Mre11 binds to DSB ends and has both double-stranded 3'-5' exonuclease activity and single-stranded endonuclease activity. In Methanosarcina mazei (strain ATCC BAA-159 / DSM 3647 / Goe1 / Go1 / JCM 11833 / OCM 88) (Methanosarcina frisia), this protein is DNA double-strand break repair protein Mre11.